We begin with the raw amino-acid sequence, 241 residues long: Phosphatidylglycerophosphatase B (241 aa).

The chain crosses the membrane as a helical span at residues 1–21; it reads MFKRLSLYTLLLCLVPFFIWG. At 22 to 52 the chain is on the periplasmic side; sequence ISYQWHGNSQLTQADYWLYLLTETGSVPYAL. Residues 53-62 form a helical membrane-spanning segment; it reads ITCVLFTLLF. Topologically, residues 63–67 are cytoplasmic; it reads AFLFK. Residues 68–91 traverse the membrane as a helical segment; the sequence is NPKQWILGVIVMGISVIATQAAKT. The Periplasmic portion of the chain corresponds to 92-158; sequence GAKALFEEPR…ENETGYSFPS (67 aa). The tract at residues 94–102 is phosphatase sequence motif I; the sequence is KALFEEPRP. Residues 157–160 are phosphatase sequence motif II; that stretch reads PSGH. The helical transmembrane segment at 159 to 173 threads the bilayer; that stretch reads GHTIFAATWLMLAVG. The active-site Proton donor; for a subset of substrates is the His-160. Over 174–184 the chain is Cytoplasmic; sequence FTQLLGNRSFK. The chain crosses the membrane as a helical span at residues 185–204; the sequence is AKLLVVGIAVWGLLMLISRV. The tract at residues 202 to 213 is phosphatase sequence motif III; it reads SRVRLGMHYPID. Residues 205 to 210 lie on the Periplasmic side of the membrane; that stretch reads RLGMHY. The Nucleophile role is filled by His-209. The helical transmembrane segment at 211–235 threads the bilayer; the sequence is PIDLLVATLLAWLINSIIFAFLKKK. Residues 236 to 241 are Cytoplasmic-facing; it reads AIFVMK.

It belongs to the PA-phosphatase related phosphoesterase family.

Its subcellular location is the cell inner membrane. The protein localises to the cell outer membrane. It carries out the reaction a 1,2-diacyl-sn-glycero-3-phospho-(1'-sn-glycero-3'-phosphate) + H2O = a 1,2-diacyl-sn-glycero-3-phospho-(1'-sn-glycerol) + phosphate. The enzyme catalyses a 1,2-diacyl-sn-glycerol 3-diphosphate + H2O = a 1,2-diacyl-sn-glycero-3-phosphate + phosphate + H(+). It catalyses the reaction a 1,2-diacyl-sn-glycero-3-phosphate + H2O = a 1,2-diacyl-sn-glycerol + phosphate. The catalysed reaction is di-trans,octa-cis-undecaprenyl diphosphate + H2O = di-trans,octa-cis-undecaprenyl phosphate + phosphate + H(+). Its pathway is phospholipid metabolism; phosphatidylglycerol biosynthesis; phosphatidylglycerol from CDP-diacylglycerol: step 2/2. In terms of biological role, catalyzes the dephosphorylation of diacylglycerol diphosphate (DGPP) to phosphatidate (PA) and the subsequent dephosphorylation of PA to diacylglycerol (DAG). Also has undecaprenyl pyrophosphate phosphatase activity, required for the biosynthesis of the lipid carrier undecaprenyl phosphate. Can also use lysophosphatidic acid (LPA) and phosphatidylglycerophosphate as substrates. The pattern of activities varies according to subcellular location, PGP phosphatase activity is higher in the cytoplasmic membrane, whereas PA and LPA phosphatase activities are higher in the outer membrane. Activity is independent of a divalent cation ion and insensitive to inhibition by N-ethylmaleimide. The sequence is that of Phosphatidylglycerophosphatase B (pgpB) from Haemophilus influenzae (strain ATCC 51907 / DSM 11121 / KW20 / Rd).